Reading from the N-terminus, the 98-residue chain is MSSYKYYDLIRKPIITEKTTTLSEQNKYAFYVDKFAKKLTLKKAIEEIFKVKVKKVNILNVKGKKKRFKGIIGTQINRKKAIVTLEKDHNIDFAGGIK.

Belongs to the universal ribosomal protein uL23 family. As to quaternary structure, part of the 50S ribosomal subunit. Contacts protein L29, and trigger factor when it is bound to the ribosome.

Its function is as follows. One of the early assembly proteins it binds 23S rRNA. One of the proteins that surrounds the polypeptide exit tunnel on the outside of the ribosome. Forms the main docking site for trigger factor binding to the ribosome. The polypeptide is Large ribosomal subunit protein uL23 (Rickettsia africae (strain ESF-5)).